Reading from the N-terminus, the 227-residue chain is MKYPFQCFLAKIILLALASSFVSCYDPSPLQDYCVAVPEKNGVFVNGEFCKDPKLVTSDDFFASGLNIPGNTNKRLGSFVNPANIPGLNTLGVGIARIDFAPGGLIPPHIHPRASEIILVIKGKLLVGFVSSNDYNYTLFSKILYPGDVFVHPIGLVQFHANIGKTNAVAIGAVGSQNPGYISVGDAVFGSKPPIDPKILAKAFALDINIVRYLRKVFSPQDDIVND.

Residues 1-24 (MKYPFQCFLAKIILLALASSFVSC) form the signal peptide. A disulfide bridge connects residues Cys34 and Cys50. One can recognise a Cupin type-1 domain in the interval 64–212 (SGLNIPGNTN…AFALDINIVR (149 aa)). Residues His109, His111, and Glu116 each coordinate Mn(2+). The N-linked (GlcNAc...) asparagine glycan is linked to Asn136. His160 contacts Mn(2+).

Belongs to the germin family. Oligomer (believed to be a pentamer but probably hexamer).

The protein resides in the secreted. The protein localises to the extracellular space. It localises to the apoplast. May play a role in plant defense. Probably has no oxalate oxidase activity even if the active site is conserved. This is Germin-like protein subfamily 1 member 3 from Arabidopsis thaliana (Mouse-ear cress).